A 297-amino-acid polypeptide reads, in one-letter code: Ribosomal RNA small subunit methyltransferase H (297 aa).

S-adenosyl-L-methionine-binding positions include 30-32, Asp-48, Phe-75, Asp-96, and Gln-103; that span reads GGY.

Belongs to the methyltransferase superfamily. RsmH family.

It localises to the cytoplasm. The catalysed reaction is cytidine(1402) in 16S rRNA + S-adenosyl-L-methionine = N(4)-methylcytidine(1402) in 16S rRNA + S-adenosyl-L-homocysteine + H(+). In terms of biological role, specifically methylates the N4 position of cytidine in position 1402 (C1402) of 16S rRNA. The protein is Ribosomal RNA small subunit methyltransferase H of Ehrlichia canis (strain Jake).